A 157-amino-acid chain; its full sequence is uncharacterized protein (157 aa).

The N-acetyltransferase domain occupies 3-157 (FTLEDMTEEE…TNIRMRKQLC (155 aa)).

This sequence belongs to the acetyltransferase family.

This is an uncharacterized protein from Bacillus subtilis (strain 168).